A 197-amino-acid polypeptide reads, in one-letter code: Peptidyl-tRNA hydrolase (197 aa).

Tyr-17 is a tRNA binding site. His-22 (proton acceptor) is an active-site residue. The tRNA site is built by Phe-68, Asn-70, and Asn-116.

This sequence belongs to the PTH family. In terms of assembly, monomer.

Its subcellular location is the cytoplasm. The catalysed reaction is an N-acyl-L-alpha-aminoacyl-tRNA + H2O = an N-acyl-L-amino acid + a tRNA + H(+). In terms of biological role, hydrolyzes ribosome-free peptidyl-tRNAs (with 1 or more amino acids incorporated), which drop off the ribosome during protein synthesis, or as a result of ribosome stalling. Catalyzes the release of premature peptidyl moieties from peptidyl-tRNA molecules trapped in stalled 50S ribosomal subunits, and thus maintains levels of free tRNAs and 50S ribosomes. In Yersinia enterocolitica serotype O:8 / biotype 1B (strain NCTC 13174 / 8081), this protein is Peptidyl-tRNA hydrolase.